Consider the following 547-residue polypeptide: CTP synthase (547 aa).

The amidoligase domain stretch occupies residues 1 to 267 (MKTKFIFITG…DQKIAIMLRL (267 aa)). Residue serine 14 participates in CTP binding. Serine 14 is a binding site for UTP. ATP-binding positions include 15–20 (SLGKGL) and aspartate 72. Mg(2+) contacts are provided by aspartate 72 and glutamate 141. CTP contacts are provided by residues 148–150 (DIE), 188–193 (KTKPTQ), and lysine 224. UTP is bound by residues 188–193 (KTKPTQ) and lysine 224. Residues 292-545 (TIGIVGKYVD…IRAAKTHPAG (254 aa)) enclose the Glutamine amidotransferase type-1 domain. Glycine 354 contributes to the L-glutamine binding site. Cysteine 381 serves as the catalytic Nucleophile; for glutamine hydrolysis. Residues 382 to 385 (LGMQ), glutamate 405, and arginine 473 contribute to the L-glutamine site. Active-site residues include histidine 518 and glutamate 520.

The protein belongs to the CTP synthase family. In terms of assembly, homotetramer.

It catalyses the reaction UTP + L-glutamine + ATP + H2O = CTP + L-glutamate + ADP + phosphate + 2 H(+). The enzyme catalyses L-glutamine + H2O = L-glutamate + NH4(+). The catalysed reaction is UTP + NH4(+) + ATP = CTP + ADP + phosphate + 2 H(+). Its pathway is pyrimidine metabolism; CTP biosynthesis via de novo pathway; CTP from UDP: step 2/2. Its activity is regulated as follows. Allosterically activated by GTP, when glutamine is the substrate; GTP has no effect on the reaction when ammonia is the substrate. The allosteric effector GTP functions by stabilizing the protein conformation that binds the tetrahedral intermediate(s) formed during glutamine hydrolysis. Inhibited by the product CTP, via allosteric rather than competitive inhibition. Catalyzes the ATP-dependent amination of UTP to CTP with either L-glutamine or ammonia as the source of nitrogen. Regulates intracellular CTP levels through interactions with the four ribonucleotide triphosphates. The polypeptide is CTP synthase (Nitratidesulfovibrio vulgaris (strain DP4) (Desulfovibrio vulgaris)).